The sequence spans 276 residues: Cholesterol 25-hydroxylase-like protein 1, member 2 (276 aa).

A glycan (N-linked (GlcNAc...) asparagine) is linked at Asn-30. A run of 3 helical transmembrane segments spans residues 39 to 59 (LFPV…YLSC), 90 to 110 (GVTL…QWMW), and 126 to 146 (LVGG…IWHF). The region spanning 134–265 (LLLFDLQYFI…FSHWDKMFGT (132 aa)) is the Fatty acid hydroxylase domain. Positions 144-148 (WHFLH) match the Histidine box-1 motif. A Histidine box-2 motif is present at residues 159–163 (HAIHH). N-linked (GlcNAc...) asparagine glycosylation is present at Asn-164. The next 2 membrane-spanning stretches (helical) occupy residues 175–195 (CLGG…PVLL) and 199–219 (LLTT…DHCG). Positions 240 to 246 (KHDVHHQ) match the Histidine box-3 motif.

It belongs to the sterol desaturase family. Requires Fe cation as cofactor.

The protein localises to the endoplasmic reticulum membrane. In terms of biological role, may catalyze the formation of 25-hydroxycholesterol from cholesterol. The chain is Cholesterol 25-hydroxylase-like protein 1, member 2 from Danio rerio (Zebrafish).